Consider the following 751-residue polypeptide: MSNESKCPFHQTAGGGTTNRDWWPDQLNLRILHQHSSKSSPDPDFDYAKAFKSLDFQALKKDLTALMTDSQDWWPADFGHYGPLFIRMAWHSAGTYRIGDGRGGAGSGQQRFAPLNSWPDNVSLDKARRLLWPIKQKYGNKISWADLIVLTGNVALESMGFKTFGFSGGRADVWEPDEDVYWGSEKVWLGGDTRYGKDQLKAQAPGQGDLVAEPAKHGEEQNRDLSAERNLENPLAAVQMGLIYVNPEGPEGNPDPVASGKDIRETFGRMAMNDEETVALIAGGHAFGKTHGAGPADNVGPEPEAAGLELQGLGWANKFGTGKGGDAITSGLEVIWTSTPTKWSNEYLNNLFNFEWELTKSPAGAHQWRPKEGKGAGTVPDAHDPGKKHAPSMLTSDLALRFDPIYEPIARRFKDNPDQLADAFARAWYKLIHRDMGPLARYLGPEMPNEELLWQDPLPKADPSTIGEQDIAALKAKVLASGLSVGELVSTAWASASTFRGSDKRGGANGARLRLAPQKGWAANQGVDKVLAALEKIQGEFNNGGKKISLADLIVLAGTAAVEKAAKDAGYSGSVGFRPGRVDASEAQTDVESFAVLEPLADGFRNFSKARYSVKAEKLLLDKAQLLTLTAPELTVLVGGLRVLGANHGGSKLGVFTDKPGTLSNDFFRNLLDMSVEWKPTSADNETFEGRDRKTGQVKWSGSRVDLVFGSHAQLRALSEVYGSSDGADKFVRDFVAAWQKVMELDRFDLK.

Positions 1-21 (MSNESKCPFHQTAGGGTTNRD) are disordered. Residues 90 to 244 (WHSAGTYRIG…LAAVQMGLIY (155 aa)) constitute a cross-link (tryptophyl-tyrosyl-methioninium (Trp-Tyr) (with M-270)). Residue H91 is the Proton acceptor of the active site. A cross-link (tryptophyl-tyrosyl-methioninium (Tyr-Met) (with W-90)) is located at residues 244-270 (YVNPEGPEGNPDPVASGKDIRETFGRM). H285 serves as a coordination point for heme b. The interval 365 to 390 (AHQWRPKEGKGAGTVPDAHDPGKKHA) is disordered.

This sequence belongs to the peroxidase family. Peroxidase/catalase subfamily. Homodimer or homotetramer. Requires heme b as cofactor. Formation of the three residue Trp-Tyr-Met cross-link is important for the catalase, but not the peroxidase activity of the enzyme.

The catalysed reaction is H2O2 + AH2 = A + 2 H2O. The enzyme catalyses 2 H2O2 = O2 + 2 H2O. In terms of biological role, bifunctional enzyme with both catalase and broad-spectrum peroxidase activity. This chain is Catalase-peroxidase, found in Pseudomonas putida (strain GB-1).